A 175-amino-acid polypeptide reads, in one-letter code: Movement protein (175 aa).

The segment at 30–47 is homodimerization; the sequence is ADLDDDEEVTTGQEELFL. The RNA-binding stretch occupies residues 50 to 156; sequence EQAQARHLFS…QRLTSMERNG (107 aa). Disordered stretches follow at residues 58 to 89 and 103 to 175; these read FSRK…MEYS and SSSP…VLHR. A compositionally biased stretch (basic and acidic residues) spans 63-74; that stretch reads ISREVPADESRS. 2 positions are modified to phosphoserine: S64 and S133. 2 stretches are compositionally biased toward polar residues: residues 115–141 and 148–169; these read PSLT…SQSP and RLTS…SSTK.

It belongs to the polerovirus movement protein family. In terms of assembly, homodimer. In terms of processing, phosphorylated.

The protein resides in the host cell junction. It localises to the host plasmodesma. The protein localises to the host Golgi apparatus. In terms of biological role, together with movement protein P3a, facilitates long-distance movement of virions in host. Transports viral genome to neighboring plant cells directly through plasmosdesmata, without any budding. The movement protein allows efficient cell to cell propagation, by bypassing the host cell wall barrier. Binds ssRNA. The protein is Movement protein of Beta vulgaris (Sugar beet).